The sequence spans 89 residues: MSLTTEQKKEILAQYGLHETDTGSPEAQVAMLTKRIVDLTEHLKTHKHDHHSRRGLLLLVGRRRRLLKYVAKVDVARYRSLIERLGLRR.

Belongs to the universal ribosomal protein uS15 family. As to quaternary structure, part of the 30S ribosomal subunit. Forms a bridge to the 50S subunit in the 70S ribosome, contacting the 23S rRNA.

Its function is as follows. One of the primary rRNA binding proteins, it binds directly to 16S rRNA where it helps nucleate assembly of the platform of the 30S subunit by binding and bridging several RNA helices of the 16S rRNA. Functionally, forms an intersubunit bridge (bridge B4) with the 23S rRNA of the 50S subunit in the ribosome. The sequence is that of Small ribosomal subunit protein uS15 from Mycobacteroides abscessus (strain ATCC 19977 / DSM 44196 / CCUG 20993 / CIP 104536 / JCM 13569 / NCTC 13031 / TMC 1543 / L948) (Mycobacterium abscessus).